Here is a 248-residue protein sequence, read N- to C-terminus: Probable proteasome subunit alpha type-3 (248 aa).

Belongs to the peptidase T1A family. In terms of assembly, the 26S proteasome consists of a 20S proteasome core and two 19S regulatory subunits. The 20S proteasome core is composed of 28 subunits that are arranged in four stacked rings, resulting in a barrel-shaped structure. The two end rings are each formed by seven alpha subunits, and the two central rings are each formed by seven beta subunits. The catalytic chamber with the active sites is on the inside of the barrel.

Its subcellular location is the cytoplasm. The protein resides in the nucleus. The proteasome is a multicatalytic proteinase complex which is characterized by its ability to cleave peptides with Arg, Phe, Tyr, Leu, and Glu adjacent to the leaving group at neutral or slightly basic pH. The proteasome has an ATP-dependent proteolytic activity. This is Probable proteasome subunit alpha type-3 from Schizosaccharomyces pombe (strain 972 / ATCC 24843) (Fission yeast).